A 323-amino-acid chain; its full sequence is Cytochrome c biogenesis protein CcsA (323 aa).

The next 8 membrane-spanning stretches (helical) occupy residues V17–F37, G44–G64, F68–V88, L98–L118, M143–I163, I229–N249, E262–R279, and I291–G311.

Belongs to the CcmF/CycK/Ccl1/NrfE/CcsA family. As to quaternary structure, may interact with Ccs1.

It is found in the plastid. The protein localises to the chloroplast thylakoid membrane. Required during biogenesis of c-type cytochromes (cytochrome c6 and cytochrome f) at the step of heme attachment. In Lotus japonicus (Lotus corniculatus var. japonicus), this protein is Cytochrome c biogenesis protein CcsA.